A 1612-amino-acid chain; its full sequence is Roundabout homolog 1 (1612 aa).

Residues 1–19 form the signal peptide; sequence MIAEPAHFYLFGLICLCSG. Topologically, residues 20–858 are extracellular; sequence SRLRQEDFPP…QQISDVVRQP (839 aa). Ig-like C2-type domains are found at residues 29–125, 131–218, 223–307, 312–407, and 416–502; these read PRIV…ASLE, DDFR…AELT, PSFV…ATLT, PHFV…LEVT, and PVIR…AYIE. Residues Cys-50 and Cys-108 are joined by a disulfide bond. The N-linked (GlcNAc...) asparagine glycan is linked to Asn-121. 3 cysteine pairs are disulfide-bonded: Cys-152–Cys-201, Cys-244–Cys-291, and Cys-333–Cys-389. The N-linked (GlcNAc...) asparagine glycan is linked to Asn-424. A disulfide bond links Cys-437 and Cys-486. Fibronectin type-III domains are found at residues 524–618, 637–734, and 739–835; these read APSK…TQDV, VVLH…TLEE, and PPRS…LDSH. N-linked (GlcNAc...) asparagine glycans are attached at residues Asn-751, Asn-781, and Asn-788. Residues 859–879 traverse the membrane as a helical segment; that stretch reads AFIAGIGAACWIILMVFSIWL. Over 880–1612 the chain is Cytoplasmic; it reads YRHRKKRNGL…NNEELEETES (733 aa). Phosphoserine is present on Ser-901. Thr-909 carries the phosphothreonine modification. Tyr-999 is modified (phosphotyrosine). A Phosphoserine modification is found at Ser-1016. Tyr-1034 carries the post-translational modification Phosphotyrosine. Residues 1045 to 1068 are disordered; sequence SNNMNNGAGDSSEKHWKPPGQQKP. Position 1075 is a phosphotyrosine (Tyr-1075). Disordered stretches follow at residues 1088 to 1298, 1313 to 1358, and 1381 to 1612; these read RAND…ADME, EQTP…DGSF, and RRQM…ETES. Over residues 1098–1107 the composition is skewed to polar residues; it reads PYNQSYDQNT. The segment covering 1108–1124 has biased composition (low complexity); that stretch reads GGSYNSSDRGSSTSGSQ. The segment covering 1147–1157 has biased composition (pro residues); that stretch reads LPPPPAHPPPH. Thr-1201 is subject to Phosphothreonine. The span at 1216–1230 shows a compositional bias: polar residues; that stretch reads YSHQSTATLTPSPQE. Basic and acidic residues predominate over residues 1242-1254; the sequence is DLGHMPHPPDRRR. The span at 1257–1268 shows a compositional bias: pro residues; that stretch reads VSPPPPPRPISP. Phosphoserine is present on Ser-1258. Residues 1283–1297 are compositionally biased toward acidic residues; it reads MDTDAPEEEEDEADM. Residues 1345–1358 are compositionally biased toward low complexity; that stretch reads SSGRSSVSSSDGSF. Residues 1399–1412 are compositionally biased toward polar residues; it reads PRPTSPVSTDSNMS. A compositionally biased stretch (basic residues) spans 1420–1431; the sequence is RPAKKQKHQPGH. The span at 1441–1451 shows a compositional bias: pro residues; it reads LPPPPVPPPAI. Basic and acidic residues-rich tracts occupy residues 1477–1502 and 1510–1534; these read ARTD…RQVT and DPRE…RDLP. Polar residues predominate over residues 1553–1562; it reads FPTSNNPRDP. Residues 1563-1575 show a composition bias toward low complexity; that stretch reads SSSSSMSSRGSGS. The span at 1603–1612 shows a compositional bias: acidic residues; it reads NNEELEETES.

Belongs to the immunoglobulin superfamily. ROBO family. Homodimer. Dimerization is mediated by the extracellular domain and is independent of SLIT liganding. Interacts with SLIT1 Interacts with SLIT2. Interacts with FLRT3. Interacts with MYO9B (via Rho-GAP domain). Post-translationally, ubiquitinated. May be deubiquitinated by USP33. Detected in embryonic thalamus neurons (at protein level). Expressed in embryonal spinal cord. Expressed in embryonal lung, and in adult lung bronchial epithelial cells of large proximal airways.

The protein resides in the cell membrane. It localises to the cell projection. Its subcellular location is the axon. The protein localises to the endoplasmic reticulum-Golgi intermediate compartment membrane. Receptor for SLIT1 and SLIT2 that mediates cellular responses to molecular guidance cues in cellular migration, including axonal navigation at the ventral midline of the neural tube and projection of axons to different regions during neuronal development. Interaction with the intracellular domain of FLRT3 mediates axon attraction towards cells expressing NTN1. In axon growth cones, the silencing of the attractive effect of NTN1 by SLIT2 may require the formation of a ROBO1-DCC complex. Plays a role in the regulation of cell migration via its interaction with MYO9B; inhibits MYO9B-mediated stimulation of RHOA GTPase activity, and thereby leads to increased levels of active, GTP-bound RHOA. May be required for lung development. This Mus musculus (Mouse) protein is Roundabout homolog 1 (Robo1).